The chain runs to 439 residues: Glutamyl-tRNA(Gln) amidotransferase subunit D (439 aa).

The Asparaginase/glutaminase domain occupies 88–419 (GKVKIISTGG…EEVKRIMLTN (332 aa)). Active-site residues include threonine 98, threonine 174, aspartate 175, and lysine 253.

This sequence belongs to the asparaginase 1 family. GatD subfamily. Heterodimer of GatD and GatE.

The catalysed reaction is L-glutamyl-tRNA(Gln) + L-glutamine + ATP + H2O = L-glutaminyl-tRNA(Gln) + L-glutamate + ADP + phosphate + H(+). Functionally, allows the formation of correctly charged Gln-tRNA(Gln) through the transamidation of misacylated Glu-tRNA(Gln) in organisms which lack glutaminyl-tRNA synthetase. The reaction takes place in the presence of glutamine and ATP through an activated gamma-phospho-Glu-tRNA(Gln). The GatDE system is specific for glutamate and does not act on aspartate. The polypeptide is Glutamyl-tRNA(Gln) amidotransferase subunit D (Metallosphaera sedula (strain ATCC 51363 / DSM 5348 / JCM 9185 / NBRC 15509 / TH2)).